Here is a 365-residue protein sequence, read N- to C-terminus: 2-aminoethylphosphonate--pyruvate transaminase (365 aa).

N6-(pyridoxal phosphate)lysine is present on Lys194.

It belongs to the class-V pyridoxal-phosphate-dependent aminotransferase family. PhnW subfamily. In terms of assembly, homodimer. Pyridoxal 5'-phosphate is required as a cofactor.

It carries out the reaction (2-aminoethyl)phosphonate + pyruvate = phosphonoacetaldehyde + L-alanine. Involved in phosphonate degradation. The protein is 2-aminoethylphosphonate--pyruvate transaminase of Bacillus mycoides (strain KBAB4) (Bacillus weihenstephanensis).